A 341-amino-acid polypeptide reads, in one-letter code: Protein FAM50A (341 aa).

Disordered regions lie at residues 1–27 and 80–147; these read MAQYKGAASEAGRAMQLMKKREREREQ and LVKE…EIEE. A compositionally biased stretch (basic and acidic residues) spans 80–115; that stretch reads LVKEREKQLAKKEQSKELQLKLEKQKEKKRKEEQKR. Acidic residues predominate over residues 125–147; sequence DEGEDEEEEEEEEEEEEEDEIEE.

It belongs to the FAM50 family.

The protein resides in the nucleus. In terms of biological role, probably involved in the regulation of pre-mRNA splicing. This chain is Protein FAM50A (fam50a), found in Danio rerio (Zebrafish).